The primary structure comprises 127 residues: Protein YwpG (127 aa).

Interacts with both the D1 and D2 domains of dynamin-like protein DynA.

The protein localises to the cell membrane. In Bacillus subtilis (strain 168), this protein is Protein YwpG (ywpG).